Here is a 384-residue protein sequence, read N- to C-terminus: Succinyl-diaminopimelate desuccinylase (384 aa).

Residue His-71 coordinates Zn(2+). Asp-73 is an active-site residue. Asp-104 is a binding site for Zn(2+). Catalysis depends on Glu-139, which acts as the Proton acceptor. Glu-140, Glu-168, and His-357 together coordinate Zn(2+).

The protein belongs to the peptidase M20A family. DapE subfamily. Homodimer. It depends on Zn(2+) as a cofactor. Co(2+) serves as cofactor.

The catalysed reaction is N-succinyl-(2S,6S)-2,6-diaminopimelate + H2O = (2S,6S)-2,6-diaminopimelate + succinate. The protein operates within amino-acid biosynthesis; L-lysine biosynthesis via DAP pathway; LL-2,6-diaminopimelate from (S)-tetrahydrodipicolinate (succinylase route): step 3/3. Functionally, catalyzes the hydrolysis of N-succinyl-L,L-diaminopimelic acid (SDAP), forming succinate and LL-2,6-diaminopimelate (DAP), an intermediate involved in the bacterial biosynthesis of lysine and meso-diaminopimelic acid, an essential component of bacterial cell walls. The chain is Succinyl-diaminopimelate desuccinylase from Afipia carboxidovorans (strain ATCC 49405 / DSM 1227 / KCTC 32145 / OM5) (Oligotropha carboxidovorans).